Consider the following 561-residue polypeptide: Potassium-transporting ATPase potassium-binding subunit (561 aa).

Helical transmembrane passes span 4–24 (IVMQ…PLGI), 65–85 (AVSV…VLML), 133–153 (IGLT…LFAV), 177–197 (LYIL…QGVV), 253–273 (FTNL…VVMF), 285–305 (AIMT…TISE), 380–400 (GLYG…LLVG), 417–437 (MVCL…AVAV), 484–504 (MVGA…ALYL), and 528–548 (FIGL…LPAL).

This sequence belongs to the KdpA family. In terms of assembly, the system is composed of three essential subunits: KdpA, KdpB and KdpC.

It is found in the cell membrane. Its function is as follows. Part of the high-affinity ATP-driven potassium transport (or Kdp) system, which catalyzes the hydrolysis of ATP coupled with the electrogenic transport of potassium into the cytoplasm. This subunit binds the extracellular potassium ions and delivers the ions to the membrane domain of KdpB through an intramembrane tunnel. This is Potassium-transporting ATPase potassium-binding subunit from Listeria monocytogenes serotype 4a (strain HCC23).